A 140-amino-acid polypeptide reads, in one-letter code: MAGWQSYVDNLMCDGCCQEAAIVGYCDAKYVWAATAGGVFQSITPAEIDVIIGKDREGFFTNGLTLGGKKCSVIRDSLYVDSDCTMDIRTKSQGGEPTYNVAVGRAGRVLVFVMGKEGVHGGGLNKKAYSMAKYLRDSGF.

A2 carries the N-acetylalanine modification.

This sequence belongs to the profilin family. As to quaternary structure, occurs in many kinds of cells as a complex with monomeric actin in a 1:1 ratio. Interacts with PFN2. Interacts with ACTMAP (via N-terminus); the interaction may facilitate efficient cleavage of the acetylated N-terminus of immature actin by ACTMAP.

It localises to the cytoplasm. Its subcellular location is the cytoskeleton. Binds to actin and affects the structure of the cytoskeleton. At high concentrations, profilin prevents the polymerization of actin, whereas it enhances it at low concentrations. By binding to PIP2, it inhibits the formation of IP3 and DG. The protein is Profilin-2 (Pfn2) of Rattus norvegicus (Rat).